A 299-amino-acid chain; its full sequence is HTH-type transcriptional regulator CrgA (299 aa).

The region spanning 1–60 is the HTH lysR-type domain; sequence MKTNSEELTVFVQVVESGSFSRAAEQLAMANSAVSRIVKRLEEKLGVNLLNRTTRQLSLT. The H-T-H motif DNA-binding region spans 20-39; sequence FSRAAEQLAMANSAVSRIVK.

This sequence belongs to the LysR transcriptional regulatory family. As to quaternary structure, forms oligomers. Oligomerization is required for DNA binding.

In terms of biological role, involved in the regulation of bacterial adhesion to host epithelial cells. May play a central regulatory role in meningococcal adhesion, particularly in switching from initial adhesion to intimate adhesion by downregulating the bacterial surface structures that hinder this adhesion. During intimate adhesion, negatively regulates the expression of pilC1, encoding a pilus-associated protein, pilE, encoding the pilin, and sia genes, encoding the capsule. Also negatively regulates its own expression. May also regulate other genes that are involved in intimate adhesion. Binds specifically to the promoter region of pilC1 and crgA (both harboring a CREN element), and pilE and sia (both devoid of a CREN element). Acts through interaction with RNA polymerase (RNAP). Interaction with RNAP leads to the production of short abortive transcripts, suggesting that CrgA may act by preventing RNAP from clearing the promoter. This is HTH-type transcriptional regulator CrgA from Neisseria meningitidis serogroup C (strain 8013).